A 164-amino-acid polypeptide reads, in one-letter code: uncharacterized protein (164 aa).

Residues 1–60 constitute a chloroplast transit peptide; it reads MERSASVGVNDGRFGGNQFYSPSFSSSSSSSSMRHVNYSCGSCGYELNLSSTNRITSTIG.

The protein localises to the plastid. Its subcellular location is the chloroplast. This is an uncharacterized protein from Arabidopsis thaliana (Mouse-ear cress).